The sequence spans 98 residues: snRNA-activating protein complex subunit 5 (98 aa).

The disordered stretch occupies residues 75–98; sequence ALELSTRSHVQEEEEEEEEEEEDS. Over residues 86-98 the composition is skewed to acidic residues; it reads EEEEEEEEEEEDS.

In terms of assembly, part of the SNAPc complex composed of 5 subunits: SNAPC1, SNAPC2, SNAPC3, SNAPC4 and SNAPC5. SNAPC5 interacts with SNAPC4.

It is found in the nucleus. Its function is as follows. Part of the SNAPc complex required for the transcription of both RNA polymerase II and III small-nuclear RNA genes. Binds to the proximal sequence element (PSE), a non-TATA-box basal promoter element common to these 2 types of genes. Recruits TBP and BRF2 to the U6 snRNA TATA box. The polypeptide is snRNA-activating protein complex subunit 5 (SNAPC5) (Bos taurus (Bovine)).